We begin with the raw amino-acid sequence, 553 residues long: Probable inactive serine/threonine-protein kinase samkD (553 aa).

The SAM domain maps to Trp-24–Tyr-90. Residues Tyr-134–Phe-393 form the Protein kinase domain. Residues Ile-140–Ile-148 and Lys-165 contribute to the ATP site.

This sequence belongs to the protein kinase superfamily. Ser/Thr protein kinase family.

This chain is Probable inactive serine/threonine-protein kinase samkD (samkD), found in Dictyostelium discoideum (Social amoeba).